The sequence spans 189 residues: Glucose-6-phosphate isomerase (189 aa).

Fe cation contacts are provided by histidine 88, histidine 90, glutamate 97, and histidine 136.

It belongs to the archaeal-type GPI family. Homodimer.

It is found in the cytoplasm. The enzyme catalyses alpha-D-glucose 6-phosphate = beta-D-fructose 6-phosphate. The protein operates within carbohydrate degradation; glycolysis; D-glyceraldehyde 3-phosphate and glycerone phosphate from D-glucose: step 2/4. The polypeptide is Glucose-6-phosphate isomerase (Thermococcus gammatolerans (strain DSM 15229 / JCM 11827 / EJ3)).